A 552-amino-acid chain; its full sequence is Membrane protein insertase YidC (552 aa).

Residues 3-23 form a helical membrane-spanning segment; the sequence is IKRTVLWVIFFMSAVMLFDNW. The tract at residues 35–59 is disordered; sequence PSATPTKTVGSAAPGTTTPGTQPAD. Positions 42–59 are enriched in low complexity; it reads TVGSAAPGTTTPGTQPAD. 3 helical membrane passes run 364–384, 430–450, and 504–524; these read WGWSIVLLTLLIKAVFFPLSA, FGGCLPVVIQIPVFISLYWVL, and MMFMPIAFSVMFFFFPAGLVL.

Belongs to the OXA1/ALB3/YidC family. Type 1 subfamily. Interacts with the Sec translocase complex via SecD. Specifically interacts with transmembrane segments of nascent integral membrane proteins during membrane integration.

It localises to the cell inner membrane. Functionally, required for the insertion and/or proper folding and/or complex formation of integral membrane proteins into the membrane. Involved in integration of membrane proteins that insert both dependently and independently of the Sec translocase complex, as well as at least some lipoproteins. Aids folding of multispanning membrane proteins. This is Membrane protein insertase YidC from Paraburkholderia phytofirmans (strain DSM 17436 / LMG 22146 / PsJN) (Burkholderia phytofirmans).